The primary structure comprises 148 residues: Large ribosomal subunit protein bL9 (148 aa).

This sequence belongs to the bacterial ribosomal protein bL9 family.

Functionally, binds to the 23S rRNA. The protein is Large ribosomal subunit protein bL9 of Coprothermobacter proteolyticus (strain ATCC 35245 / DSM 5265 / OCM 4 / BT).